We begin with the raw amino-acid sequence, 287 residues long: Fructose-bisphosphate aldolase (287 aa).

Serine 50 serves as a coordination point for D-glyceraldehyde 3-phosphate. Aspartate 85 functions as the Proton donor in the catalytic mechanism. Residues histidine 86, aspartate 107, glutamate 137, and histidine 181 each contribute to the Zn(2+) site. Position 182 (glycine 182) interacts with dihydroxyacetone phosphate. Histidine 209 is a binding site for Zn(2+). Dihydroxyacetone phosphate is bound by residues 210–212 (GGT) and 231–234 (NVNT). Phosphothreonine occurs at positions 212 and 234.

The protein belongs to the class II fructose-bisphosphate aldolase family. Requires Zn(2+) as cofactor.

The catalysed reaction is beta-D-fructose 1,6-bisphosphate = D-glyceraldehyde 3-phosphate + dihydroxyacetone phosphate. It functions in the pathway carbohydrate degradation; glycolysis; D-glyceraldehyde 3-phosphate and glycerone phosphate from D-glucose: step 4/4. Its function is as follows. Catalyzes the aldol condensation of dihydroxyacetone phosphate (DHAP or glycerone-phosphate) with glyceraldehyde 3-phosphate (G3P) to form fructose 1,6-bisphosphate (FBP) in gluconeogenesis and the reverse reaction in glycolysis. This Geobacillus stearothermophilus (Bacillus stearothermophilus) protein is Fructose-bisphosphate aldolase (fba).